The primary structure comprises 699 residues: Triacylglycerol hydrolase DDHD2 (699 aa).

The span at 1–11 (MSSGESHQEQL) shows a compositional bias: polar residues. Residues 1 to 25 (MSSGESHQEQLSQSDPSPSPNSCSS) form a disordered region. Positions 12 to 25 (SQSDPSPSPNSCSS) are enriched in low complexity. Positions 30–112 (DMDASSSYEP…WDELPSEVRR (83 aa)) constitute a WWE domain. The Nucleophile role is filled by Ser-351. An SAM domain is found at 383 to 445 (DRGDASTLEE…KILNHFSARK (63 aa)). Phosphoserine is present on Ser-447. The region spanning 484–688 (LNYKPEIFFA…VLLVLKEIYQ (205 aa)) is the DDHD domain. The interval 599-635 (QASETAEETEAEPESSSEKSNEANTEEPPVEVKEEAP) is disordered. A compositionally biased stretch (acidic residues) spans 603–613 (TAEETEAEPES).

It belongs to the PA-PLA1 family. As to quaternary structure, forms homooligomers and, to a much smaller extent, heterooligomers with DDHD1.

The protein resides in the cytoplasm. Its subcellular location is the cytosol. It localises to the endoplasmic reticulum-Golgi intermediate compartment. The protein localises to the golgi apparatus. It is found in the cis-Golgi network. The enzyme catalyses a triacylglycerol + H2O = a diacylglycerol + a fatty acid + H(+). It carries out the reaction a diacylglycerol + H2O = a monoacylglycerol + a fatty acid + H(+). The catalysed reaction is a 1,3-diacylglycerol + H2O = a 1-acylglycerol + a fatty acid + H(+). It catalyses the reaction a 1-acylglycerol + H2O = glycerol + a fatty acid + H(+). The enzyme catalyses 1,2,3-tri-(9Z-octadecenoyl)-glycerol + H2O = di-(9Z)-octadecenoylglycerol + (9Z)-octadecenoate + H(+). It carries out the reaction di-(9Z)-octadecenoylglycerol + H2O = (9Z-octadecenoyl)-glycerol + (9Z)-octadecenoate + H(+). The catalysed reaction is 1,3-di-(9Z-octadecenoyl)-glycerol + H2O = 1-(9Z-octadecenoyl)-glycerol + (9Z)-octadecenoate + H(+). It catalyses the reaction trihexadecanoylglycerol + H2O = dihexadecanoylglycerol + hexadecanoate + H(+). The enzyme catalyses 1,2-di-(9Z-octadecenoyl)-sn-glycero-3-phosphocholine + H2O = (9Z-octadecenoyl)-sn-glycero-3-phosphocholine + (9Z)-octadecenoate + H(+). It carries out the reaction 1-(9Z-octadecenoyl)-glycerol + H2O = glycerol + (9Z)-octadecenoate + H(+). The catalysed reaction is 1,2-di-(9Z-octadecenoyl)-sn-glycero-3-phosphate + H2O = 2-(9Z-octadecenoyl)-sn-glycero-3-phosphate + (9Z)-octadecenoate + H(+). It catalyses the reaction 1-hexadecanoyl-2-(9Z-octadecenoyl)-sn-glycero-3-phosphate + H2O = 2-(9Z-octadecenoyl)-sn-glycero-3-phosphate + hexadecanoate + H(+). The enzyme catalyses 1-hexadecanoyl-2-(9Z-octadecenoyl)-sn-glycero-3-phosphoethanolamine + H2O = 2-(9Z-octadecenoyl)-sn-glycero-3-phosphoethanolamine + hexadecanoate + H(+). It carries out the reaction 1-hexadecanoyl-2-(9Z-octadecenoyl)-sn-glycero-3-phospho-L-serine + H2O = 2-(9Z-octadecenoyl)-sn-glycero-3-phospho-L-serine + hexadecanoate + H(+). The catalysed reaction is 1-hexadecanoyl-2-(9Z-octadecenoyl)-sn-glycero-3-phosphocholine + H2O = 2-(9Z-octadecenoyl)-sn-glycero-3-phosphocholine + hexadecanoate + H(+). Diacylglycerol (DAG) and triacylglycerol (TAG) lipase that is required for proper lipid homeostasis in the central nervous system. It cooperates with PNPLA2/ATGL in neuronal TAG catabolism and hydrolyzes sn-1,3-DAG downstream of PNPLA2/ATGL. In vitro, also acts as a phospholipase that hydrolyzes preferentially phosphatidic acids, including 1,2-dioleoyl-sn-phosphatidic acid, phosphatidylcholine and phosphatidylethanolamine. Specifically binds to phosphatidylinositol 3-phosphate (PI(3)P), phosphatidylinositol 4-phosphate (PI(4)P), phosphatidylinositol 5-phosphate (PI(5)P) and possibly phosphatidylinositol 4,5-bisphosphate (PI(4,5)P2). May be involved in the maintenance of the endoplasmic reticulum and/or Golgi structures. May regulate the transport between Golgi apparatus and plasma membrane. This Mus musculus (Mouse) protein is Triacylglycerol hydrolase DDHD2.